A 138-amino-acid polypeptide reads, in one-letter code: Growth factor (138 aa).

Residues 1–19 (MSMKYLMLLFAAMIIRSFA) form the signal peptide. Asparagine 34 is a glycosylation site (N-linked (GlcNAc...) asparagine; by host). Positions 41-81 (AIRLCGPEGDGYCLHGDCIHARDIDGMYCRCSHGYTGIRCQ) constitute an EGF-like domain. Disulfide bonds link cysteine 45–cysteine 58, cysteine 53–cysteine 69, and cysteine 71–cysteine 80. N-linked (GlcNAc...) asparagine; by host glycosylation is present at asparagine 95.

The protein belongs to the orthopoxvirus OPG019 family.

Its subcellular location is the secreted. Its function is as follows. Stimulates cellular proliferation (hyperplasia)and mobility around infected cells to promote rapid and efficient spread of infection. The polypeptide is Growth factor (OPG019) (Rabbitpox virus (strain Utrecht) (RPV)).